Here is a 195-residue protein sequence, read N- to C-terminus: ATP-dependent Clp protease proteolytic subunit 3 (195 aa).

The Nucleophile role is filled by Ser97. His122 is a catalytic residue.

It belongs to the peptidase S14 family. In terms of assembly, fourteen ClpP subunits assemble into 2 heptameric rings which stack back to back to give a disk-like structure with a central cavity, resembling the structure of eukaryotic proteasomes.

The protein localises to the cytoplasm. The enzyme catalyses Hydrolysis of proteins to small peptides in the presence of ATP and magnesium. alpha-casein is the usual test substrate. In the absence of ATP, only oligopeptides shorter than five residues are hydrolyzed (such as succinyl-Leu-Tyr-|-NHMec, and Leu-Tyr-Leu-|-Tyr-Trp, in which cleavage of the -Tyr-|-Leu- and -Tyr-|-Trp bonds also occurs).. Functionally, cleaves peptides in various proteins in a process that requires ATP hydrolysis. Has a chymotrypsin-like activity. Plays a major role in the degradation of misfolded proteins. In Rhizobium meliloti (strain 1021) (Ensifer meliloti), this protein is ATP-dependent Clp protease proteolytic subunit 3.